A 584-amino-acid polypeptide reads, in one-letter code: 2-succinyl-5-enolpyruvyl-6-hydroxy-3-cyclohexene-1-carboxylate synthase (584 aa).

It belongs to the TPP enzyme family. MenD subfamily. As to quaternary structure, homodimer. The cofactor is Mg(2+). Mn(2+) serves as cofactor. Thiamine diphosphate is required as a cofactor.

It carries out the reaction isochorismate + 2-oxoglutarate + H(+) = 5-enolpyruvoyl-6-hydroxy-2-succinyl-cyclohex-3-ene-1-carboxylate + CO2. It participates in quinol/quinone metabolism; 1,4-dihydroxy-2-naphthoate biosynthesis; 1,4-dihydroxy-2-naphthoate from chorismate: step 2/7. Its pathway is quinol/quinone metabolism; menaquinone biosynthesis. In terms of biological role, catalyzes the thiamine diphosphate-dependent decarboxylation of 2-oxoglutarate and the subsequent addition of the resulting succinic semialdehyde-thiamine pyrophosphate anion to isochorismate to yield 2-succinyl-5-enolpyruvyl-6-hydroxy-3-cyclohexene-1-carboxylate (SEPHCHC). This Bacillus thuringiensis subsp. konkukian (strain 97-27) protein is 2-succinyl-5-enolpyruvyl-6-hydroxy-3-cyclohexene-1-carboxylate synthase.